The chain runs to 431 residues: Sulfide dehydrogenase [flavocytochrome c] flavoprotein chain (431 aa).

The segment at residues 1–30 (MTLNRRDFIKTSGAAVAAVGILGFPHLAFG) is a signal peptide (tat-type signal). 70–76 (YTCYLSN) provides a ligand contact to FAD. Cysteine 191 and cysteine 367 are disulfide-bonded.

As to quaternary structure, dimer of one cytochrome and one flavoprotein. In terms of processing, predicted to be exported by the Tat system. The position of the signal peptide cleavage has been experimentally proven.

It is found in the periplasm. It carries out the reaction hydrogen sulfide + 2 Fe(III)-[cytochrome c] = sulfur + 2 Fe(II)-[cytochrome c] + H(+). In Allochromatium vinosum (strain ATCC 17899 / DSM 180 / NBRC 103801 / NCIMB 10441 / D) (Chromatium vinosum), this protein is Sulfide dehydrogenase [flavocytochrome c] flavoprotein chain (fccB).